We begin with the raw amino-acid sequence, 630 residues long: Telomere repeat-binding protein 5 (630 aa).

Disordered stretches follow at residues 1-38 (MVLQ…SENH), 56-78 (EGGN…CAVK), and 308-327 (YTAS…GSPR). The segment covering 57–71 (GGNSSSSSNNTSGNN) has biased composition (low complexity). Positions 309–325 (TASQSEETNKNEGQSGS) are enriched in polar residues. The Ubiquitin-like domain maps to 354-433 (VKLGIKSFRV…SDTLGFCLEP (80 aa)). Residues 463 to 489 (LPSPGKHAKPSNSVESDLDSKPSAPNR) form a disordered region. Residues 523 to 582 (AQRRIRRPFSVAEVEALVQAVERLGTGRWRDVKLRAFDNAKHRTYVDLKDKWKTLVHTAR) form the HTH myb-type domain. Residues 551 to 578 (WRDVKLRAFDNAKHRTYVDLKDKWKTLV) constitute a DNA-binding region (H-T-H motif).

Homodimer. In terms of tissue distribution, expressed ubiquitously.

It localises to the nucleus. Functionally, binds specifically to the plant telomeric double-stranded DNA sequences. At least 6 repeats of telomeric sequences are required for binding. In Arabidopsis thaliana (Mouse-ear cress), this protein is Telomere repeat-binding protein 5 (TRP5).